A 138-amino-acid chain; its full sequence is Probable histone H2AXb (138 aa).

Positions 1–10 (MSSAGGGGGR) are enriched in gly residues. The tract at residues 1-24 (MSSAGGGGGRGKSKGSKSVSRSSK) is disordered. Position 135 is a phosphoserine; by ATM and ATR (Ser-135). The [ST]-Q motif motif lies at 135-136 (SQ).

The protein belongs to the histone H2A family. In terms of assembly, the nucleosome is a histone octamer containing two molecules each of H2A, H2B, H3 and H4 assembled in one H3-H4 heterotetramer and two H2A-H2B heterodimers. The octamer wraps approximately 147 bp of DNA. Interacts with numerous proteins required for DNA damage signaling and repair when phosphorylated on Ser-135. Post-translationally, phosphorylated to form H2AXS139ph (gamma-H2AX) in response to DNA double strand breaks (DSBs) generated by exogenous genotoxic agents and by stalled replication forks, and may also occur during meiotic recombination events. Phosphorylation can extend up to several thousand nucleosomes from the actual site of the DSB and may mark the surrounding chromatin for recruitment of proteins required for DNA damage signaling and repair. Widespread phosphorylation may also serve to amplify the damage signal or aid repair of persistent lesions. H2AXS139ph in response to ionizing radiation is mediated by ATM while defects in DNA replication induce H2AXS139ph subsequent to activation of ATR. Dephosphorylation of H2AXS139ph by PP2A is required for DNA DSB repair.

It localises to the nucleus. Its subcellular location is the chromosome. Variant histone H2A which replaces conventional H2A in a subset of nucleosomes. Nucleosomes wrap and compact DNA into chromatin, limiting DNA accessibility to the cellular machineries which require DNA as a template. Histones thereby play a central role in transcription regulation, DNA repair, DNA replication and chromosomal stability. DNA accessibility is regulated via a complex set of post-translational modifications of histones, also called histone code, and nucleosome remodeling. Required for checkpoint-mediated arrest of cell cycle progression in response to low doses of ionizing radiation and for efficient repair of DNA double strand breaks (DSBs) specifically when modified by C-terminal phosphorylation. This is Probable histone H2AXb from Oryza sativa subsp. indica (Rice).